A 300-amino-acid polypeptide reads, in one-letter code: GTPase Era (300 aa).

One can recognise an Era-type G domain in the interval 8–176 (RCGYVAIVGR…EKVIADHLPE (169 aa)). The interval 16 to 23 (GRPNVGKS) is G1. 16–23 (GRPNVGKS) serves as a coordination point for GTP. The interval 42–46 (QTTRH) is G2. The tract at residues 63-66 (DTPG) is G3. Residues 63–67 (DTPGM) and 125–128 (NKTD) each bind GTP. Residues 125 to 128 (NKTD) form a G4 region. A G5 region spans residues 155-157 (ISA). The KH type-2 domain occupies 199–283 (VREKIMRQLG…MLNLWVKVKG (85 aa)).

The protein belongs to the TRAFAC class TrmE-Era-EngA-EngB-Septin-like GTPase superfamily. Era GTPase family. In terms of assembly, monomer.

The protein localises to the cytoplasm. Its subcellular location is the cell inner membrane. Functionally, an essential GTPase that binds both GDP and GTP, with rapid nucleotide exchange. Plays a role in 16S rRNA processing and 30S ribosomal subunit biogenesis and possibly also in cell cycle regulation and energy metabolism. The protein is GTPase Era of Pseudomonas fluorescens (strain Pf0-1).